Consider the following 150-residue polypeptide: Transcription antitermination protein NusB (150 aa).

The protein belongs to the NusB family.

Functionally, involved in transcription antitermination. Required for transcription of ribosomal RNA (rRNA) genes. Binds specifically to the boxA antiterminator sequence of the ribosomal RNA (rrn) operons. The polypeptide is Transcription antitermination protein NusB (Streptococcus pyogenes serotype M1).